Here is a 63-residue protein sequence, read N- to C-terminus: Hyphancin-3G (63 aa).

Positions 1–22 (MNFSRILFFMFACFVALASVSA) are cleaved as a signal peptide. Residues 23–26 (VPEP) constitute a propeptide, removed by a dipeptidylpeptidase. Leu61 is subject to Leucine amide.

It belongs to the cecropin family.

The protein localises to the secreted. Functionally, has antibacterial activity. In Hyphantria cunea (Fall webworm moth), this protein is Hyphancin-3G.